A 395-amino-acid polypeptide reads, in one-letter code: Multidrug resistance protein MdtL (395 aa).

12 helical membrane passes run 4 to 24, 42 to 62, 69 to 89, 93 to 113, 131 to 151, 158 to 178, 217 to 237, 247 to 267, 271 to 291, 295 to 315, 328 to 350, and 355 to 377; these read FLLC…MYLV, IAFS…GKIA, PVAI…SRAS, LFLS…VVAF, LLNG…HLIM, SLFY…LFIL, VSVI…VMGF, ALTA…LGLF, TLML…SLAH, VTLF…GVAM, VASS…LAAI, and AMNM…IFSV.

The protein belongs to the major facilitator superfamily. DHA1 family. MdtL (TC 2.A.1.2.22) subfamily.

It is found in the cell inner membrane. This Salmonella newport (strain SL254) protein is Multidrug resistance protein MdtL.